We begin with the raw amino-acid sequence, 279 residues long: ATP-dependent Clp protease proteolytic subunit-related protein 2, chloroplastic (279 aa).

The N-terminal 54 residues, 1–54 (MAVSFNTTLHQPSLSPSCSIKLYSGLKPQSASFLASGYQNLNKEFYGRVYKSLQ), are a transit peptide targeting the chloroplast.

This sequence belongs to the peptidase S14 family. Component of the chloroplastic Clp protease core complex which consist of at least 16 proteins: CLPP4 (3 copies), CLPP5 (3 copies), CLPR4 (2 copies), ClpP1 (1 copy), CLPP6 (1 copy), CLPR2 (1 copy), CLPT1 (1 copy), CLPT2 (1 copy) and 3 copies of CLPP3 and/or CLPR1 and/or CLPR3. The core complex is organized in two heptameric rings, one containing CLPP3,4,5,6 in a 1:2:3:1 ratio and the other CLPP1 and CLPR1,2,3,4 in a 3:1:1:1:1 ratio. Expressed at least in leaves and roots.

The protein localises to the plastid. It is found in the chloroplast. Functionally, required for chloroplast development and integrity. Involved in the regulation of plastoglobules formation. The sequence is that of ATP-dependent Clp protease proteolytic subunit-related protein 2, chloroplastic from Arabidopsis thaliana (Mouse-ear cress).